Reading from the N-terminus, the 398-residue chain is Selection and upkeep of intraepithelial T-cells protein 8 (398 aa).

The signal sequence occupies residues Met-1–Ser-25. An Ig-like V-type domain is found at Glu-26–Thr-141. Residues Glu-26–Leu-244 are Extracellular-facing. Cys-49 and Cys-123 are disulfide-bonded. N-linked (GlcNAc...) asparagine glycosylation is found at Asn-92 and Asn-139. The Ig-like C1-type domain occupies Ala-142–Ile-233. A disulfide bond links Cys-163 and Cys-217. Residues Trp-245–Ile-265 form a helical membrane-spanning segment. Residues Asn-266–Ser-288 are Cytoplasmic-facing. Residues Trp-289 to Pro-309 traverse the membrane as a helical segment. Over His-310–Leu-331 the chain is Extracellular. Residues Leu-332–Ile-352 form a helical membrane-spanning segment. Topologically, residues Lys-353–Lys-398 are cytoplasmic.

The protein belongs to the SKINT family. As to expression, expressed in skin, thymus, testis and, to a lower extent, bladder, brain, heart, kidney, mammary gland, small intestine and uterus.

It localises to the membrane. Functionally, may act by engaging a cell surface molecule on immature T-cells in the embryonic thymus. The protein is Selection and upkeep of intraepithelial T-cells protein 8 (Skint8) of Mus musculus (Mouse).